The chain runs to 359 residues: Phospho-N-acetylmuramoyl-pentapeptide-transferase (359 aa).

A run of 10 helical transmembrane segments spans residues 3 to 23 (QIMIAVAIAVAVSILLTPALI), 55 to 75 (VAILAGIWAGYFGTHLAGLAF), 80 to 100 (ITASGLLVLGLATSLGGVGFL), 117 to 137 (TAKTVGQITSAVLFAVLVLQF), 156 to 176 (IATVTLTPALFVLFCVLVVSA), 187 to 207 (LDGLAAGCMAMVTGAYVLITF), 231 to 251 (LALIAAATAGACIGFLWWNAA), 255 to 275 (IFMGDTGSLALGGIIAGLSVT), 280 to 300 (ILAVVLGALFVAEITSVVLQI), and 334 to 354 (FWLLTAITCGLGVALFYGEWL).

This sequence belongs to the glycosyltransferase 4 family. MraY subfamily. Mg(2+) serves as cofactor.

It localises to the cell inner membrane. The catalysed reaction is UDP-N-acetyl-alpha-D-muramoyl-L-alanyl-gamma-D-glutamyl-meso-2,6-diaminopimeloyl-D-alanyl-D-alanine + di-trans,octa-cis-undecaprenyl phosphate = di-trans,octa-cis-undecaprenyl diphospho-N-acetyl-alpha-D-muramoyl-L-alanyl-D-glutamyl-meso-2,6-diaminopimeloyl-D-alanyl-D-alanine + UMP. Its pathway is cell wall biogenesis; peptidoglycan biosynthesis. In terms of biological role, catalyzes the initial step of the lipid cycle reactions in the biosynthesis of the cell wall peptidoglycan: transfers peptidoglycan precursor phospho-MurNAc-pentapeptide from UDP-MurNAc-pentapeptide onto the lipid carrier undecaprenyl phosphate, yielding undecaprenyl-pyrophosphoryl-MurNAc-pentapeptide, known as lipid I. This Mycobacterium marinum (strain ATCC BAA-535 / M) protein is Phospho-N-acetylmuramoyl-pentapeptide-transferase.